Here is a 316-residue protein sequence, read N- to C-terminus: Small ribosomal subunit protein mS26 (316 aa).

The disordered stretch occupies residues 41-71; it reads TTRSARDSVSIPPDSPNYIKVPEPPQSSEVR.

This sequence belongs to the mitochondrion-specific ribosomal protein mS26 family. Component of the mitochondrial small ribosomal subunit (mt-SSU). Mature N.crassa 74S mitochondrial ribosomes consist of a small (37S) and a large (54S) subunit. The 37S small subunit contains a 16S ribosomal RNA (16S mt-rRNA) and 32 different proteins. The 54S large subunit contains a 23S rRNA (23S mt-rRNA) and 42 different proteins.

It localises to the mitochondrion. Its function is as follows. Component of the mitochondrial ribosome (mitoribosome), a dedicated translation machinery responsible for the synthesis of mitochondrial genome-encoded proteins, including at least some of the essential transmembrane subunits of the mitochondrial respiratory chain. The mitoribosomes are attached to the mitochondrial inner membrane and translation products are cotranslationally integrated into the membrane. This Neurospora crassa (strain ATCC 24698 / 74-OR23-1A / CBS 708.71 / DSM 1257 / FGSC 987) protein is Small ribosomal subunit protein mS26 (pet123).